Reading from the N-terminus, the 234-residue chain is Protein CIST1 (234 aa).

Residues 1-24 (MACPQLPPLLLLVLVVLLKAGVNY) form the signal peptide. Residues 25 to 180 (NTPFTDIVTS…GPRELHRNPS (156 aa)) are Extracellular-facing. The span at 41-121 (SPVSSLISSP…THPSSGSPSA (81 aa)) shows a compositional bias: polar residues. Residues 41-174 (SPVSSLISSP…PAPGDTGPRE (134 aa)) form a disordered region. The span at 122–140 (ELTPSSHSTLPSSESLTPH) shows a compositional bias: low complexity. Over residues 141–159 (WSPTSHSPGTEPLTSTDQT) the composition is skewed to polar residues. Residues 181–201 (VVVVVCLLVSLLLIGSVVMAV) traverse the membrane as a helical segment. At 202-234 (RFCHRNESKFENLDEVSMGSVNDRLSFAHHLQE) the chain is on the cytoplasmic side.

The protein localises to the membrane. In Homo sapiens (Human), this protein is Protein CIST1.